Here is a 274-residue protein sequence, read N- to C-terminus: Exosome complex component RRP40 (274 aa).

A2 bears the N-acetylalanine mark. Residue K150 forms a Glycyl lysine isopeptide (Lys-Gly) (interchain with G-Cter in SUMO2) linkage.

Belongs to the RRP40 family. Component of the RNA exosome core complex (Exo-9), composed of EXOSC1, EXOSC2, EXOSC3, EXOSC4, EXOSC5, EXOSC6, EXOSC7, EXOSC8 and EXOSC9; within the complex interacts with EXOSC5 and EXOSC9. The catalytically inactive RNA exosome core complex (Exo-9) associates with the catalytic subunit EXOSC10/RRP6. Exo-9 may associate with DIS3 to form the nucleolar exosome complex, or DIS3L to form the cytoplasmic exosome complex. Exo-9 is formed by a hexameric base ring consisting of the heterodimers EXOSC4-EXOSC9, EXOSC5-EXOSC8 and EXOSC6-EXOSC7, and a cap ring consisting of EXOSC1, EXOSC2 and EXOSC3. The RNA exosome complex associates with cofactors C1D/RRP47, MPHOSPH6/MPP6 and MTREX/MTR4. Interacts with MPHOSPH6/MPP6; the interaction is direct. Interacts with GTPBP1. Interacts with ZC3HAV1. Interacts with DDX17 only in the presence of ZC3HAV1 in an RNA-independent manner. Interacts with DHX36; this interaction occurs in a RNase-insensitive manner. Interacts with HBS1L isoform 2.

The protein resides in the cytoplasm. It is found in the nucleus. Its subcellular location is the nucleolus. Non-catalytic component of the RNA exosome complex which has 3'-&gt;5' exoribonuclease activity and participates in a multitude of cellular RNA processing and degradation events. In the nucleus, the RNA exosome complex is involved in proper maturation of stable RNA species such as rRNA, snRNA and snoRNA, in the elimination of RNA processing by-products and non-coding 'pervasive' transcripts, such as antisense RNA species and promoter-upstream transcripts (PROMPTs), and of mRNAs with processing defects, thereby limiting or excluding their export to the cytoplasm. The RNA exosome may be involved in Ig class switch recombination (CSR) and/or Ig variable region somatic hypermutation (SHM) by targeting AICDA deamination activity to transcribed dsDNA substrates. In the cytoplasm, the RNA exosome complex is involved in general mRNA turnover and specifically degrades inherently unstable mRNAs containing AU-rich elements (AREs) within their 3' untranslated regions, and in RNA surveillance pathways, preventing translation of aberrant mRNAs. It seems to be involved in degradation of histone mRNA. The catalytic inactive RNA exosome core complex of 9 subunits (Exo-9) is proposed to play a pivotal role in the binding and presentation of RNA for ribonucleolysis, and to serve as a scaffold for the association with catalytic subunits and accessory proteins or complexes. EXOSC3 as peripheral part of the Exo-9 complex stabilizes the hexameric ring of RNase PH-domain subunits through contacts with EXOSC9 and EXOSC5. This is Exosome complex component RRP40 (Exosc3) from Mus musculus (Mouse).